Here is a 192-residue protein sequence, read N- to C-terminus: Protein ORF45 (192 aa).

Its function is as follows. Plays a role in the expression of ORF41, which itself is required for late gene expression. The protein is Protein ORF45 of Autographa californica nuclear polyhedrosis virus (AcMNPV).